We begin with the raw amino-acid sequence, 101 residues long: Acylphosphatase (101 aa).

Residues 15–101 (RMYARVYGLV…KGEFEDFETY (87 aa)) form the Acylphosphatase-like domain. Residues Arg-30 and Asn-48 contribute to the active site.

Belongs to the acylphosphatase family.

It catalyses the reaction an acyl phosphate + H2O = a carboxylate + phosphate + H(+). This Saccharolobus solfataricus (strain ATCC 35092 / DSM 1617 / JCM 11322 / P2) (Sulfolobus solfataricus) protein is Acylphosphatase (acyP).